The following is a 431-amino-acid chain: Glutamate-1-semialdehyde 2,1-aminomutase (431 aa).

An N6-(pyridoxal phosphate)lysine modification is found at K267.

It belongs to the class-III pyridoxal-phosphate-dependent aminotransferase family. HemL subfamily. As to quaternary structure, homodimer. Requires pyridoxal 5'-phosphate as cofactor.

The protein localises to the cytoplasm. The enzyme catalyses (S)-4-amino-5-oxopentanoate = 5-aminolevulinate. The protein operates within porphyrin-containing compound metabolism; protoporphyrin-IX biosynthesis; 5-aminolevulinate from L-glutamyl-tRNA(Glu): step 2/2. The polypeptide is Glutamate-1-semialdehyde 2,1-aminomutase (Myxococcus xanthus (strain DK1622)).